Consider the following 720-residue polypeptide: Serrate RNA effector molecule (720 aa).

3 disordered regions span residues 1-192 (MADV…NPQR), 288-335 (LNKS…FTSD), and 361-380 (ENVL…LHSG). Over residues 33–47 (SLPQQEQEQDQQQLP) the composition is skewed to low complexity. Positions 48–76 (LRRERDSRERRDERDIERPPPNRRERDRS) are enriched in basic and acidic residues. Phosphoserine occurs at positions 76, 90, and 92. Over residues 99–115 (DRRHSPPQRRSPPQKRY) the composition is skewed to basic residues. 2 stretches are compositionally biased toward basic and acidic residues: residues 116-126 (RRDDNGYDGRR) and 136-164 (PDRR…ERPH). The span at 288 to 297 (LNKSGRTSEP) shows a compositional bias: polar residues. The segment covering 368 to 378 (ETEKSGREKLH) has biased composition (basic and acidic residues). The C2H2-type zinc finger occupies 498–523 (YGCGAKGCTKLFHAAEFVYKHLKLKH). Disordered stretches follow at residues 543–622 (YMND…AFGG) and 666–687 (RDPS…APFL). Positions 570–607 (PSMENRLRDDRGGRRERDGRANGNDRNDRSEDQQRGDN) are enriched in basic and acidic residues. Gly residues predominate over residues 608 to 622 (DGGNPGEVGYDAFGG). A Phosphoserine modification is found at S689.

It belongs to the ARS2 family. In terms of assembly, interacts with HYL1. Interacts with RCF3, RS40 and RS41. As to expression, expressed in shoot meristems and in emerging organ primordia throughout development.

The protein localises to the nucleus. It localises to the nucleus speckle. Functionally, acts as a mediator between the cap-binding complex (CBC) and both the pre-mRNA splicing and primary microRNAs (miRNAs) processing machinery. Required for proper processing of primary miRNAs to miRNAs, thereby playing a role in RNA-mediated gene silencing (RNAi) by miRNAs. Does not participate in sense post-transcriptional gene silencing. Acts as a regulator of meristem activity and adaxial leaf fate via the miRNA gene-silencing pathway by regulating the expression of PHB and by limiting the competence of shoot tissue to respond to KNOX expression. Its function is however not limited to miRNA-mediated repression of leaf polarity genes, but rather acts as a general regulator of primary microRNAs processing. Also critical for the accumulation of the trans-acting small interfering RNA (ta-siRNA). Required for pre-mRNA splicing. This Arabidopsis thaliana (Mouse-ear cress) protein is Serrate RNA effector molecule (SE).